The primary structure comprises 456 residues: Protein FAM124B (456 aa).

The interval 262–313 (NGCLRGDTHPQDSSLNSVSTQRTLEPRSRRRSRSRRFKVHSLELPQPSGSWE) is disordered. A compositionally biased stretch (polar residues) spans 272-284 (QDSSLNSVSTQRT). The segment covering 289–300 (SRRRSRSRRFKV) has biased composition (basic residues).

Belongs to the FAM124 family. In terms of assembly, interacts with CHD7 and CHD8. Expressed strongly in lung, at slightly lower levels in heart, kidney, brain and testis, and weakly in liver (at protein level). In brain, highly expressed in cortex, hippocampus, dentate gyrus, caudate putamen and cerebellum (at protein level).

The protein localises to the nucleus. In Mus musculus (Mouse), this protein is Protein FAM124B (Fam124b).